The chain runs to 894 residues: ABC-transporter-regulating transcription factor (894 aa).

The segment at residues 71 to 98 (CDMCRKKKIKCDGKMPKCSHCINYRTDC) is a DNA-binding region (zn(2)-C6 fungal-type). Polar residues predominate over residues 159 to 174 (NTALNSLKSPTNKFNG). The tract at residues 159–219 (NTALNSLKSP…PKESETEVEG (61 aa)) is disordered. Low complexity predominate over residues 175-189 (SSATSQSQHTTASRH). A compositionally biased stretch (polar residues) spans 199 to 210 (SPHTAATSPNSP). A helical transmembrane segment spans residues 649–669 (CVWLILYYPVSALVTLFANIL). The disordered stretch occupies residues 724-797 (AEKESHSKKK…MSNPTRAFAP (74 aa)). Over residues 736–750 (AAPDEPQDLRQKTPD) the composition is skewed to basic and acidic residues. 2 stretches are compositionally biased toward polar residues: residues 751–761 (ENSVPSPSTKR) and 771–792 (LFPS…SNPT).

The protein resides in the nucleus. Its subcellular location is the membrane. Its function is as follows. Transcription factor that regulates expression of the genes related to resistance to azole compounds. The protein is ABC-transporter-regulating transcription factor of Aspergillus oryzae (strain ATCC 42149 / RIB 40) (Yellow koji mold).